The sequence spans 312 residues: Porphobilinogen deaminase (312 aa).

The residue at position 235 (cysteine 235) is an S-(dipyrrolylmethanemethyl)cysteine.

It belongs to the HMBS family. As to quaternary structure, monomer. Requires dipyrromethane as cofactor.

The catalysed reaction is 4 porphobilinogen + H2O = hydroxymethylbilane + 4 NH4(+). It functions in the pathway porphyrin-containing compound metabolism; protoporphyrin-IX biosynthesis; coproporphyrinogen-III from 5-aminolevulinate: step 2/4. Tetrapolymerization of the monopyrrole PBG into the hydroxymethylbilane pre-uroporphyrinogen in several discrete steps. This Mycolicibacterium gilvum (strain PYR-GCK) (Mycobacterium gilvum (strain PYR-GCK)) protein is Porphobilinogen deaminase.